A 506-amino-acid chain; its full sequence is Maturase K (506 aa).

Belongs to the intron maturase 2 family. MatK subfamily.

It is found in the plastid. It localises to the chloroplast. In terms of biological role, usually encoded in the trnK tRNA gene intron. Probably assists in splicing its own and other chloroplast group II introns. This Crataegus monogyna (Hawthorn) protein is Maturase K.